The sequence spans 407 residues: MAEDPQGGGAGGPQHPVPSGSHSSFPEYELPELHTRVFHVGAFGELWRGRLGAQDLSLNEPQAAAQPTDGEASNNGFEDAAVAEDLGCSLEAAAELRVVCGLDKLRCLGEDEDPEVIPENTDLVTLCVRKGLLDYREENITIDRACRQETFAYEMESHALGKKPENPADMIEEGESILSVNILYPVIFNKHREHKPYQTVLVLGSQKLTELRDSICCVSDLQIGGEFSNAPDQAPEHISKDLYKSAFFYFEGTFYNDKRYPECRDLSRTIIEWSESHDRGYGKFQTARMEDFTFNDLNIKLGFPYLYCHQGDCEHVVVITDIRLVHHDDCLDRTLYPLLTKKHWLWTRKCFVCKMYTARWVTNNDTFAPEDPCFFCDVCFRMLHYDSEGNKLGEFLAYPYVDPGTFN.

Gly residues predominate over residues 1 to 12 (MAEDPQGGGAGG). The tract at residues 1–26 (MAEDPQGGGAGGPQHPVPSGSHSSFP) is disordered.

Belongs to the SNAPC3/SRD2 family. Part of the SNAPc complex composed of 5 subunits: SNAPC1, SNAPC2, SNAPC3, SNAPC4 and SNAPC5. SNAPC3 interacts with SNAPC1.

Its subcellular location is the nucleus. In terms of biological role, part of the SNAPc complex required for the transcription of both RNA polymerase II and III small-nuclear RNA genes. Binds to the proximal sequence element (PSE), a non-TATA-box basal promoter element common to these 2 types of genes. Recruits TBP and BRF2 to the U6 snRNA TATA box. The polypeptide is snRNA-activating protein complex subunit 3 (Snapc3) (Rattus norvegicus (Rat)).